Consider the following 510-residue polypeptide: Glutamate decarboxylase (510 aa).

107–109 provides a ligand contact to substrate; it reads QLS. Residue Lys-322 is modified to N6-(pyridoxal phosphate)lysine. A substrate-binding site is contributed by Arg-483.

It belongs to the group II decarboxylase family. As to quaternary structure, homodimer. Pyridoxal 5'-phosphate serves as cofactor. As to expression, expressed in the head (at protein level).

The enzyme catalyses L-glutamate + H(+) = 4-aminobutanoate + CO2. Functionally, catalyzes the production of GABA. The polypeptide is Glutamate decarboxylase (Gad1) (Drosophila melanogaster (Fruit fly)).